A 239-amino-acid chain; its full sequence is Vesicle-associated protein 1-3 (239 aa).

An N-acetylmethionine modification is found at Met1. Residue Thr2 is modified to N-acetylthreonine; in Vesicle-associated protein 1-3, N-terminally processed. Residues 2 to 215 are Cytoplasmic-facing; that stretch reads TTGDLVNIHP…RKETSKKQSG (214 aa). The 122-residue stretch at 6 to 127 folds into the MSP domain; the sequence is LVNIHPTELK…EDFKLRVVYI (122 aa). 2 positions are modified to phosphoserine: Ser133 and Ser164. The stretch at 179–214 forms a coiled coil; that stretch reads SMISKLTEEKTSATQQSQKLRLELEMLRKETSKKQS. A helical; Anchor for type IV membrane protein transmembrane segment spans residues 216-236; that stretch reads GHSLLLMLLVGLLGCVIGYLL.

It belongs to the VAMP-associated protein (VAP) (TC 9.B.17) family.

Its subcellular location is the endoplasmic reticulum membrane. Its function is as follows. May play a role in vesicle trafficking. The chain is Vesicle-associated protein 1-3 (PVA13) from Arabidopsis thaliana (Mouse-ear cress).